The following is a 445-amino-acid chain: Protein EMP47 (445 aa).

An N-terminal signal peptide occupies residues 1 to 28 (MMMLITMKSTVLLSVFTVLATWAGLLEA). Residues 29–412 (HPLGDTSDAS…DGPQVDEIAR (384 aa)) are Lumenal-facing. An L-type lectin-like domain is found at 36–254 (DASKLSSDYS…EIFKMQFFNG (219 aa)). A disulfide bridge links Cys179 with Cys213. Residues 413–433 (KLMIWLLPLIFIMLVMAYYTF) form a helical membrane-spanning segment. Positions 430-433 (YYTF) are mediates the interactions with COPI and COPII coat complexes. The Cytoplasmic segment spans residues 434 to 445 (RIRQEIIKTKLL). Positions 441–445 (KTKLL) match the Di-lysine motif motif.

Belongs to the EMP46/EMP47 family. As to quaternary structure, homooligomers. Interacts with EMP46 in the endoplasmic reticulum membrane. Interacts with the coatomer proteins COP1, SEC21 and SEC23.

It is found in the golgi apparatus membrane. Its subcellular location is the endoplasmic reticulum membrane. Functionally, involved in the secretion of glycoproteins and in nucleus architecture and gene silencing. Required for the endoplasmic reticulum exit of EMP46. The chain is Protein EMP47 (EMP47) from Saccharomyces cerevisiae (strain ATCC 204508 / S288c) (Baker's yeast).